A 204-amino-acid chain; its full sequence is Large ribosomal subunit protein uL4 (204 aa).

Residues 49–90 form a disordered region; the sequence is KVKGMGEVSGTTKKPYRQKGTGSARQGSLRAPQYRTGGAVHG.

Belongs to the universal ribosomal protein uL4 family. Part of the 50S ribosomal subunit.

In terms of biological role, one of the primary rRNA binding proteins, this protein initially binds near the 5'-end of the 23S rRNA. It is important during the early stages of 50S assembly. It makes multiple contacts with different domains of the 23S rRNA in the assembled 50S subunit and ribosome. Forms part of the polypeptide exit tunnel. In Gluconacetobacter diazotrophicus (strain ATCC 49037 / DSM 5601 / CCUG 37298 / CIP 103539 / LMG 7603 / PAl5), this protein is Large ribosomal subunit protein uL4.